A 1207-amino-acid chain; its full sequence is MGLDNPTVVTGQNVQFSYDMASSSKKSRNKKKKSKPSIKEPQSAPLLAVETESVEETHPQAELYDSEADYPSSRVIRRAANGDVIVESLNEAGSGVQAQQAQQQKHSAISSKLVAHWESLSPEEKRKILSISKEEVFSVTKSYQTLHNCNCTVCGRRHVPMEQELESIYNQLYEMARQDNPNSDFVLFHLNLIKELQRGTSSGAEQRTASLQSRGASFLDNMRDEAVKYCISNEGVDRLKEEVLQFKHNKQRQYSEQQRKQQLPPVHTHNSPSDSPSIDELPEREQESLLHTLPDELGPDSSEVNEQLREKYLKFAKTFVSSHPKIAQEYVNRMMMYPDMRALTEDLIKNNGQDFVKAMEAFVSSQQDGPLPGSPEHTKLTAEQFQELQKQLVEKAGLDMSQSPVPTNDDPPQDCTDTDEIDTDLRGRVLLKQFMAGESIINQAFKSLQGSNKNQLKKSVSHSSQGLPEDSEYDEDLNYSDSYDDEDSPYDDDVYDDNDAESYDEDDDSHHKHHHQQHLHHHHREQDAEADDYDSDIDQQERLEEGRGLIQIAITKLLQRKLIVSYQEKQAERNRERLLLELEAEEQQKKEKEEKKLKKKEKEKEKKRQMQLAKEEEKRKQVEEEARLKQEAEAREMQRRENQRKKVEEAKRKKDLEMRKRLEEQRRREEEQERQRRMKEEIKRKRDQERKQREEEQRKRKQEKELKKLQSLEVKKKREEDDKPTEESSQEDNLHKENISHDLLNQLAHPAGGVPYGIVPVKQEMSEEKTVNDDIFNMINEATSKSISTSKSISTSPSHFNALLQKGIPRKSIDTSSIGLNYASAQAALPQPLSFPVDLTEALGFAQKTQVQTSISGPPGLSKNTAASSWDNVPGYVQLSPKSVTQNHSNVQVQTTPHGSVPGQHRASYSTFGASVDPNDTFSGDLTNLTNFLVQTKLEDVSTSAPLHSVSSSTTALPRGETSIYGNNLWNNEQPHIGSLISSHASGPSTQAPLHPRRSIWDNNASVNNYAADLWGNTSSNSTPIAPSTAVASSMVSAHQASATDVIIQAYTLLSTSGGFVPIDVLYQNCLSYLTDKGSFTFGQFVGQLLALRNANECEVLSNDVGMMTHCRFTTPQLQSTLYAPAAAPGGSDLPPRQPSKGLFSDPVSTSTVGLTTIPVLSTSTGSTSSATPTGSIALGQPSSGQSNFFDFNQQLAQPSRANNIWG.

7 disordered regions span residues 1–58, 248–284, 398–420, 451–535, 586–735, 1124–1148, and 1163–1183; these read MGLD…EETH, HNKQ…LPER, LDMS…DTDE, SNKN…DYDS, EQQK…DNLH, APAA…SDPV, and TSTG…GQPS. Polar residues predominate over residues 7–16; the sequence is TVVTGQNVQF. The segment covering 25 to 36 has biased composition (basic residues); sequence KKSRNKKKKSKP. Positions 252–262 are enriched in low complexity; it reads RQYSEQQRKQQ. Positions 469–507 are enriched in acidic residues; that stretch reads EDSEYDEDLNYSDSYDDEDSPYDDDVYDDNDAESYDEDD. Over residues 511 to 523 the composition is skewed to basic residues; it reads HKHHHQQHLHHHH. Positions 564–727 form a coiled coil; the sequence is VSYQEKQAER…REEDDKPTEE (164 aa). Over residues 586 to 721 the composition is skewed to basic and acidic residues; that stretch reads EQQKKEKEEK…LEVKKKREED (136 aa). Residues 1163–1176 show a composition bias toward low complexity; that stretch reads TSTGSTSSATPTGS.

It belongs to the NST1 family.

The protein resides in the cytoplasm. Functionally, may act as a negative regulator of salt tolerance. The protein is Stress response protein NST1 (NST1) of Eremothecium gossypii (strain ATCC 10895 / CBS 109.51 / FGSC 9923 / NRRL Y-1056) (Yeast).